The sequence spans 218 residues: Phosphoglycolate phosphatase (218 aa).

The Nucleophile role is filled by aspartate 7. Mg(2+) is bound by residues aspartate 7, aspartate 9, and aspartate 167.

The protein belongs to the HAD-like hydrolase superfamily. CbbY/CbbZ/Gph/YieH family. It depends on Mg(2+) as a cofactor.

The catalysed reaction is 2-phosphoglycolate + H2O = glycolate + phosphate. It participates in organic acid metabolism; glycolate biosynthesis; glycolate from 2-phosphoglycolate: step 1/1. Functionally, specifically catalyzes the dephosphorylation of 2-phosphoglycolate. Is involved in the dissimilation of the intracellular 2-phosphoglycolate formed during the DNA repair of 3'-phosphoglycolate ends, a major class of DNA lesions induced by oxidative stress. This chain is Phosphoglycolate phosphatase, found in Cereibacter sphaeroides (strain ATCC 17025 / ATH 2.4.3) (Rhodobacter sphaeroides).